Here is a 246-residue protein sequence, read N- to C-terminus: Polyhedrin (246 aa).

It belongs to the polyhedrin family.

Functionally, major component of the virus occlusion bodies, which are large proteinaceous structures (polyhedra), that protect the virus from the outside environment for extended periods until they are ingested by insect larvae. The polypeptide is Polyhedrin (PH) (Heliothis zea nuclear polyhedrosis virus (HzSNPV)).